A 391-amino-acid polypeptide reads, in one-letter code: UPF0229 protein CLH_2838 (391 aa).

2 disordered regions span residues 1 to 23 (MAIFRDRTDKQVDHDRAIEDKRR) and 75 to 107 (VATGTGEEKRGDKIESGSKKAMGKGNKGAGNEE). Over residues 80–92 (GEEKRGDKIESGS) the composition is skewed to basic and acidic residues.

Belongs to the UPF0229 family.

This Clostridium botulinum (strain Alaska E43 / Type E3) protein is UPF0229 protein CLH_2838.